Here is a 148-residue protein sequence, read N- to C-terminus: Snaclec stejaggregin-A subunit beta-3 (148 aa).

The signal sequence occupies residues 1-23 (MGRFISVSFGLLVVFLSLSGAGA). A disulfide bridge connects residues C27 and C38. A C-type lectin domain is found at 34–145 (YDLYCYKVFK…CSRTHYVVCK (112 aa)). Residues N47 and N78 are each glycosylated (N-linked (GlcNAc...) asparagine). Cystine bridges form between C55-C144 and C121-C136.

This sequence belongs to the snaclec family. As to quaternary structure, heteromultimer; disulfide-linked. Expressed by the venom gland.

The protein localises to the secreted. Functionally, interferes with one step of hemostasis (modulation of platelet aggregation, or coagulation cascade, for example). This chain is Snaclec stejaggregin-A subunit beta-3, found in Trimeresurus stejnegeri (Chinese green tree viper).